A 396-amino-acid chain; its full sequence is Phosphoglycerate kinase (396 aa).

Substrate contacts are provided by residues 21 to 23, Arg-37, 60 to 63, Arg-121, and Arg-154; these read DFN and HLGR. ATP contacts are provided by residues Lys-205, Gly-296, Glu-327, and 353–356; that span reads GGDS.

This sequence belongs to the phosphoglycerate kinase family. Monomer.

The protein localises to the cytoplasm. It catalyses the reaction (2R)-3-phosphoglycerate + ATP = (2R)-3-phospho-glyceroyl phosphate + ADP. The protein operates within carbohydrate degradation; glycolysis; pyruvate from D-glyceraldehyde 3-phosphate: step 2/5. In Anaeromyxobacter dehalogenans (strain 2CP-1 / ATCC BAA-258), this protein is Phosphoglycerate kinase.